Consider the following 507-residue polypeptide: Fluoroacetaldehyde dehydrogenase (507 aa).

219-225 (GFGIEAG) contributes to the NAD(+) binding site. Residues Glu263 and Cys302 contribute to the active site.

It belongs to the aldehyde dehydrogenase family. As to quaternary structure, homotetramer.

It carries out the reaction fluoroacetaldehyde + NAD(+) + H2O = fluoroacetate + NADH + 2 H(+). In terms of biological role, catalyzes the oxidation of fluoroacetaldehyde to fluoroacetate. Has high affinity for fluoroacetate and glycolaldehyde but not for acetaldehyde. This Streptantibioticus cattleyicolor (strain ATCC 35852 / DSM 46488 / JCM 4925 / NBRC 14057 / NRRL 8057) (Streptomyces cattleya) protein is Fluoroacetaldehyde dehydrogenase.